A 439-amino-acid chain; its full sequence is MKEIGNRESGIVDGQRNGASVGSDPTALPIPHSPLPIPGAHARPPRIALIAGEASGDILGAGLIEQLRLRYPNAEFVGIGGDAMRGVGCQTWFDASELAVMGLTEVLRHLPRLLKLRSAFRERVLAWKPDVFIGIDAPDFNLPVERWLKQRGIKTVHYVSPSVWAWREKRAEKIGVSADLVLCLFPMEPPIYARHGVDARFVGHPMADDIAYQADRAAARATLGLSASSTVLAVLPGSRHGEISRLGDTFFQAAWLVSEHLPNLHVLVPAANPGCKQLLAEQLSRSSLPVMRSHLLDGQARTAMLAADVVLLASGTATLEAMLVKRPMVVGYKVAPLTYRIVKLLGLLKVNRYALPNILANDDLAPELMQDDCAPERLCVALLDWFKHPDKVAALQPRYLALHAQLRRDASARAADAVAGLLEGRDSEVGIWDSAGAKA.

The disordered stretch occupies residues 1-35 (MKEIGNRESGIVDGQRNGASVGSDPTALPIPHSPL).

The protein belongs to the LpxB family.

It carries out the reaction a lipid X + a UDP-2-N,3-O-bis[(3R)-3-hydroxyacyl]-alpha-D-glucosamine = a lipid A disaccharide + UDP + H(+). It participates in bacterial outer membrane biogenesis; LPS lipid A biosynthesis. Condensation of UDP-2,3-diacylglucosamine and 2,3-diacylglucosamine-1-phosphate to form lipid A disaccharide, a precursor of lipid A, a phosphorylated glycolipid that anchors the lipopolysaccharide to the outer membrane of the cell. This Xanthomonas euvesicatoria pv. vesicatoria (strain 85-10) (Xanthomonas campestris pv. vesicatoria) protein is Lipid-A-disaccharide synthase.